The chain runs to 214 residues: Probable DNA (cytosine-5)-methyltransferase (214 aa).

Cysteine 62 is a catalytic residue.

Belongs to the class I-like SAM-binding methyltransferase superfamily. C5-methyltransferase family. As to quaternary structure, probably requires another subunit for function.

The enzyme catalyses a 2'-deoxycytidine in DNA + S-adenosyl-L-methionine = a 5-methyl-2'-deoxycytidine in DNA + S-adenosyl-L-homocysteine + H(+). This is probably the methylase that recognizes and modifies 5'-CpG-3'. The chain is Probable DNA (cytosine-5)-methyltransferase from Dryophytes versicolor (chameleon treefrog).